We begin with the raw amino-acid sequence, 652 residues long: MYLGSWLNRLGRGLSRPIGKTKQPIWGSLSRSLTLSSQRVPEFSSFVARTNTCGELRSSHLGQEVTLCGWIQYRRQNTFLVLRDCHGLVQILIPQDESAASVRRTLCEAPVESVVRVSGTVIARPLGQENPKMPTGEIEIKAKTAELLNACKKLPFEIKDFVKKTEALRLQYRYLDLRSSQMQHNLRLRSQMVMKMREYLCTLHGFVDIETPTLFKRTPGGAKEFLVPSREPGRFYSLPQSPQQFKQLLMVGGLDRYFQVARCYRDEGSRPDRQPEFTQIDIEMSFVDQTGIQHLVEGLLHYSWPEDKDPLVAPFPSMTFAEALATYGTDKPDTRFGMKIVDISDVFRNTEIRFLQDALAKPQGTVKAICVHEGAKYLRKEDIEFIRKFAAHHFSQEVLPIFLNARKNWSSPFAKFITEEERLELTRLMEIQEDDMVLLTAGQHEKACSLLGKLRLECADLLETRGLALRDPALFSFLWVLDFPLFLAKEESPTELESAHHPFTAPHPGDIHLLYTEPEKVRGQHYDLVLNGNEIGGGSIRIHDAQLQRYILETLLKEDVKLLSHLLQALDYGAPPHGGIALGLDRLVCLVTGAPSIRDVIAFPKSYRGHDLMSNAPDTVSPEDLKPYHIHVSWPTDSEERASATPSKYLSS.

The N-terminal 46 residues, 1–46, are a transit peptide targeting the mitochondrion; the sequence is MYLGSWLNRLGRGLSRPIGKTKQPIWGSLSRSLTLSSQRVPEFSSF. Thr218 is modified (phosphothreonine). Ser241 is modified (phosphoserine). The segment at 243-246 is aspartate; sequence QQFK. Position 265 (Arg265) interacts with L-aspartate. Residues 265–267 and Glu534 contribute to the ATP site; that span reads RDE. Arg541 serves as a coordination point for L-aspartate. ATP is bound at residue 583–586; sequence GLDR.

Belongs to the class-II aminoacyl-tRNA synthetase family. Type 1 subfamily. Homodimer.

Its subcellular location is the mitochondrion matrix. It localises to the mitochondrion membrane. The enzyme catalyses tRNA(Asp) + L-aspartate + ATP = L-aspartyl-tRNA(Asp) + AMP + diphosphate. In terms of biological role, catalyzes the attachment of aspartate to tRNA(Asp) in a two-step reaction: aspartate is first activated by ATP to form Asp-AMP and then transferred to the acceptor end of tRNA(Asp). The polypeptide is Aspartate--tRNA ligase, mitochondrial (Dars2) (Rattus norvegicus (Rat)).